We begin with the raw amino-acid sequence, 594 residues long: Probable translation initiation factor IF-2 (594 aa).

In terms of domain architecture, tr-type G spans 5 to 224 (YRAPIVVVVG…LMAGLTQRLV (220 aa)). The interval 14 to 21 (GHVDVGKT) is G1. 14-21 (GHVDVGKT) lines the GTP pocket. A G2 region spans residues 39–43 (MITQH). The segment at 80-83 (DTPG) is G3. Residues 80–84 (DTPGH) and 134–137 (NKVD) contribute to the GTP site. The segment at 134–137 (NKVD) is G4. Residues 202–204 (SAV) are G5.

The protein belongs to the TRAFAC class translation factor GTPase superfamily. Classic translation factor GTPase family. IF-2 subfamily.

Function in general translation initiation by promoting the binding of the formylmethionine-tRNA to ribosomes. Seems to function along with eIF-2. This chain is Probable translation initiation factor IF-2, found in Caldivirga maquilingensis (strain ATCC 700844 / DSM 13496 / JCM 10307 / IC-167).